The following is a 474-amino-acid chain: Shufflon protein A (474 aa).

Positions 1-361 (MKKYDRGWAS…TGAILSCQSG (361 aa)) are constant region. Residues 362–474 (TWKTSGSLNG…GVFSVFGYQT (113 aa)) form a variable region region.

The polypeptide is Shufflon protein A (Escherichia coli).